The following is a 686-amino-acid chain: Protein-glutamine gamma-glutamyltransferase 2 (686 aa).

Residue A2 is modified to N-acetylalanine. 2 cysteine pairs are disulfide-bonded: C230-C370 and C370-C371. Catalysis depends on residues C277, H335, and D358. Residues N398, D400, E437, E447, and E452 each contribute to the Ca(2+) site. At K468 the chain carries N6-acetyllysine. GTP is bound at residue 476 to 483 (RIRVGDSM). Ca(2+) is bound at residue E538. 579 to 582 (RDLY) provides a ligand contact to GTP. Residue Q632 forms an Isoglutamyl lysine isopeptide (Gln-Lys) (interchain with K-?) linkage.

This sequence belongs to the transglutaminase superfamily. Transglutaminase family. As to quaternary structure, monomer. Interacts with phospholipase C; promoting alpha-1 adrenergic receptor signaling. Interacts with PLCD1. Ca(2+) is required as a cofactor. Disulfide bond formation inactivates the calcium-dependent acyltransferase activity. Cys-370 can form disulfide bonds with both Cys-230 and Cys-371: formation of a disulfide bond between Cys-230 and Cys-370 facilitates formation of the disulfide between Cys-370 and Cys-371, which promotes inactivation of the acyltransferase activity. May also form interchain disulfids between Cys-230 and Cys-370. Ca(2+) protects against disulfide bond formation and inactivation. Post-translationally, auto-transglutaminated: Forms covalent cross-links mediated by transglutaminase between Gln-632 and the epsilon-amino group of a lysine residue of itself or HMGB1, forming homopolymers and heteropolymers, respectively. In terms of processing, S-nitrosylated, leading to inactivation of the acyltransferase activity.

The protein localises to the cytoplasm. It is found in the cytosol. Its subcellular location is the nucleus. The protein resides in the chromosome. It localises to the secreted. The protein localises to the extracellular space. It is found in the extracellular matrix. Its subcellular location is the cell membrane. The protein resides in the mitochondrion. The catalysed reaction is L-glutaminyl-[protein] + L-lysyl-[protein] = [protein]-L-lysyl-N(6)-5-L-glutamyl-[protein] + NH4(+). It carries out the reaction L-glutaminyl-[protein] + serotonin = 5-serotonyl-L-glutamyl-[protein] + NH4(+). It catalyses the reaction L-glutaminyl-[protein] + dopamine = 5-dopaminyl-L-glutamyl-[protein] + NH4(+). The enzyme catalyses L-glutaminyl-[protein] + histamine = 5-histaminyl-L-glutamyl-[protein] + NH4(+). The catalysed reaction is L-glutaminyl-[protein] + (R)-noradrenaline = 5-(R)-noradrenalinyl-L-glutamyl-[protein] + NH4(+). It carries out the reaction L-glutaminyl-[protein] + H2O = L-glutamyl-[protein] + NH4(+). Its activity is regulated as follows. Acyltransferase activity is regulated by the binding of GTP and Ca(2+): inactivated by GTP, which stabilizes its closed structure, thereby obstructing the accessibility of substrates to the active sites. In contrast, Ca(2+) acts as a cofactor by inducing conformational change to the active open form. In absence of Ca(2+), Mg(2+) may bind Ca(2+)-binding sites, promoting GTP-binding and subsequent inhibition of the acyltransferase activity. Extracellularly reduced and activated by CLIC3. Calcium-dependent acyltransferase that catalyzes the formation of covalent bonds between peptide-bound glutamine and various primary amines, such as gamma-amino group of peptide-bound lysine, or mono- and polyamines, thereby producing cross-linked or aminated proteins, respectively. Involved in many biological processes, such as bone development, angiogenesis, wound healing, cellular differentiation, chromatin modification and apoptosis. Acts as a protein-glutamine gamma-glutamyltransferase by mediating the cross-linking of proteins, such as ACO2, HSPB6, FN1, HMGB1, RAP1GDS1, SLC25A4/ANT1, SPP1 and WDR54. Under physiological conditions, the protein cross-linking activity is inhibited by GTP; inhibition is relieved by Ca(2+) in response to various stresses. When secreted, catalyzes cross-linking of proteins of the extracellular matrix, such as FN1 and SPP1 resulting in the formation of scaffolds. Plays a key role during apoptosis, both by (1) promoting the cross-linking of cytoskeletal proteins resulting in condensation of the cytoplasm, and by (2) mediating cross-linking proteins of the extracellular matrix, resulting in the irreversible formation of scaffolds that stabilize the integrity of the dying cells before their clearance by phagocytosis, thereby preventing the leakage of harmful intracellular components. In addition to protein cross-linking, can use different monoamine substrates to catalyze a vast array of protein post-translational modifications: mediates aminylation of serotonin, dopamine, noradrenaline or histamine into glutamine residues of target proteins to generate protein serotonylation, dopaminylation, noradrenalinylation or histaminylation, respectively. Mediates protein serotonylation of small GTPases during activation and aggregation of platelets, leading to constitutive activation of these GTPases. Plays a key role in chromatin organization by mediating serotonylation and dopaminylation of histone H3. Catalyzes serotonylation of 'Gln-5' of histone H3 (H3Q5ser) during serotonergic neuron differentiation, thereby facilitating transcription. Acts as a mediator of neurotransmission-independent role of nuclear dopamine in ventral tegmental area (VTA) neurons: catalyzes dopaminylation of 'Gln-5' of histone H3 (H3Q5dop), thereby regulating relapse-related transcriptional plasticity in the reward system. Regulates vein remodeling by mediating serotonylation and subsequent inactivation of ATP2A2/SERCA2. Also acts as a protein deamidase by mediating the side chain deamidation of specific glutamine residues of proteins to glutamate. Catalyzes specific deamidation of protein gliadin, a component of wheat gluten in the diet. May also act as an isopeptidase cleaving the previously formed cross-links. Also able to participate in signaling pathways independently of its acyltransferase activity: acts as a signal transducer in alpha-1 adrenergic receptor-mediated stimulation of phospholipase C-delta (PLCD) activity and is required for coupling alpha-1 adrenergic agonists to the stimulation of phosphoinositide lipid metabolism. This chain is Protein-glutamine gamma-glutamyltransferase 2, found in Mus musculus (Mouse).